The following is a 390-amino-acid chain: MPDTNSTINLSLSTRVTLAFFMSLVAFAIMLGNALVILAFVVDKNLRHRSSYFFLNLAISDFFVGVISIPLYIPHTLFEWDFGKEICVFWLTTDYLLCTASVYNIVLISYDRYLSVSNAVSYRTQHTGVLKIVTLMVAVWVLAFLVNGPMILVSESWKDEGSECEPGFFSEWYILAITSFLEFVIPVILVAYFNMNIYWSLWKRDHLSRCQSHPGLTAVSSNICGHSFRGRLSSRRSLSASTEVPASFHSERQRRKSSLMFSSRTKMNSNTIASKMGSFSQSDSVALHQREHVELLRARRLAKSLAILLGVFAVCWAPYSLFTIVLSFYSSATGPKSVWYRIAFWLQWFNSFVNPLLYPLCHKRFQKAFLKIFCIKKQPLPSQHSRSVSS.

Residues 1–19 lie on the Extracellular side of the membrane; the sequence is MPDTNSTINLSLSTRVTLA. N-linked (GlcNAc...) asparagine glycosylation is found at Asn-5 and Asn-9. Residues 20-40 traverse the membrane as a helical segment; that stretch reads FFMSLVAFAIMLGNALVILAF. Residues 41 to 52 are Cytoplasmic-facing; that stretch reads VVDKNLRHRSSY. The chain crosses the membrane as a helical span at residues 53 to 73; the sequence is FFLNLAISDFFVGVISIPLYI. Residues 74-87 are Extracellular-facing; it reads PHTLFEWDFGKEIC. Cys-87 and Cys-164 are oxidised to a cystine. The helical transmembrane segment at 88 to 108 threads the bilayer; that stretch reads VFWLTTDYLLCTASVYNIVLI. The Cytoplasmic segment spans residues 109–131; sequence SYDRYLSVSNAVSYRTQHTGVLK. The chain crosses the membrane as a helical span at residues 132 to 152; it reads IVTLMVAVWVLAFLVNGPMIL. Residues 153-172 are Extracellular-facing; the sequence is VSESWKDEGSECEPGFFSEW. Residues 173–193 traverse the membrane as a helical segment; sequence YILAITSFLEFVIPVILVAYF. The Cytoplasmic portion of the chain corresponds to 194–304; that stretch reads NMNIYWSLWK…LLRARRLAKS (111 aa). A helical membrane pass occupies residues 305-325; that stretch reads LAILLGVFAVCWAPYSLFTIV. Topologically, residues 326–341 are extracellular; that stretch reads LSFYSSATGPKSVWYR. Residues 342–362 form a helical membrane-spanning segment; that stretch reads IAFWLQWFNSFVNPLLYPLCH. At 363–390 the chain is on the cytoplasmic side; it reads KRFQKAFLKIFCIKKQPLPSQHSRSVSS.

The protein belongs to the G-protein coupled receptor 1 family. Interacts with TSPAN4. As to expression, expressed primarily in the bone marrow and eosinophils. Shows preferential distribution in cells of immunological relevance such as T-cells, dendritic cells, monocytes, mast cells, neutrophils. Also expressed in a wide variety of peripheral tissues, including the heart, kidney, liver, lung, pancreas, skeletal muscle, prostate, small intestine, spleen, testis, colon, fetal liver and lymph node.

It is found in the cell membrane. The H4 subclass of histamine receptors could mediate the histamine signals in peripheral tissues. Displays a significant level of constitutive activity (spontaneous activity in the absence of agonist). This Homo sapiens (Human) protein is Histamine H4 receptor (HRH4).